Consider the following 437-residue polypeptide: Elongation factor 1-alpha (437 aa).

One can recognise a tr-type G domain in the interval 4 to 229; it reads KPHMNLVVIG…DQLQPPAKPV (226 aa). A G1 region spans residues 13 to 20; it reads GHVDHGKS. 13–20 serves as a coordination point for GTP; that stretch reads GHVDHGKS. Residue serine 20 coordinates Mg(2+). Residues 69–73 form a G2 region; sequence GITID. A G3 region spans residues 90–93; it reads DAPG. GTP-binding positions include 90-94 and 152-155; these read DAPGH and NKMD. A G4 region spans residues 152–155; it reads NKMD. The segment at 193-195 is G5; that stretch reads SAW.

It belongs to the TRAFAC class translation factor GTPase superfamily. Classic translation factor GTPase family. EF-Tu/EF-1A subfamily.

Its subcellular location is the cytoplasm. It catalyses the reaction GTP + H2O = GDP + phosphate + H(+). Functionally, GTP hydrolase that promotes the GTP-dependent binding of aminoacyl-tRNA to the A-site of ribosomes during protein biosynthesis. The polypeptide is Elongation factor 1-alpha (Aeropyrum pernix (strain ATCC 700893 / DSM 11879 / JCM 9820 / NBRC 100138 / K1)).